A 224-amino-acid chain; its full sequence is Putative O-methyltransferase MT1258 (224 aa).

The segment covering 1 to 10 has biased composition (basic and acidic residues); it reads MDGTPGHDDM. The disordered stretch occupies residues 1–21; it reads MDGTPGHDDMPGQPAPSRGES. S-adenosyl-L-methionine is bound by residues Val-51, Glu-73, 75–76, Ser-81, Asp-99, and Ile-100; that span reads GT. Asp-147 lines the substrate pocket. An S-adenosyl-L-methionine-binding site is contributed by Asp-149.

The protein belongs to the class I-like SAM-binding methyltransferase superfamily. Cation-dependent O-methyltransferase family.

In Mycobacterium tuberculosis (strain CDC 1551 / Oshkosh), this protein is Putative O-methyltransferase MT1258.